A 527-amino-acid polypeptide reads, in one-letter code: Pentatricopeptide repeat-containing protein At4g25270, chloroplastic (527 aa).

The transit peptide at 1 to 47 (MVSIVVHKPSFSYPSVSSSSMKKKPRHHQQLKQHRQNQYNNNGFTSL) directs the protein to the chloroplast. The disordered stretch occupies residues 12–44 (SYPSVSSSSMKKKPRHHQQLKQHRQNQYNNNGF). The segment covering 21 to 35 (MKKKPRHHQQLKQHR) has biased composition (basic residues). 10 PPR repeats span residues 126–156 (NLGISSKLVRLYASCGYAEVAHEVFDRMSKR), 159–193 (SPFAWNSLISGYAELGQYEDAMALYFQMAEDGVKP), 194–228 (DRFTFPRVLKACGGIGSVQIGEAIHRDLVKEGFGY), 229–259 (DVYVLNALVVMYAKCGDIVKARNVFDMIPHK), 260–294 (DYVSWNSMLTGYLHHGLLHEALDIFRLMVQNGIEP), 295–326 (DKVAISSVLARVLSFKHGRQLHGWVIRRGMEW), 327–361 (ELSVANALIVLYSKRGQLGQACFIFDQMLERDTVS), 367–389 (SAHSKNSNGLKYFEQMHRANAKP), 390–425 (DGITFVSVLSLCANTGMVEDGERLFSLMSKEYGIDP), and 426–457 (KMEHYACMVNLYGRAGMMEEAYSMIVQEMGLE). Positions 462 to 527 (VWGALLYACY…QMMVDRGLET (66 aa)) are type E motif; degenerate.

Belongs to the PPR family. PCMP-E subfamily.

The protein resides in the plastid. The protein localises to the chloroplast. The chain is Pentatricopeptide repeat-containing protein At4g25270, chloroplastic (PCMP-E53) from Arabidopsis thaliana (Mouse-ear cress).